Reading from the N-terminus, the 270-residue chain is tRNA pseudouridine synthase A (270 aa).

The active-site Nucleophile is D60. The segment at 107 to 111 (FHARF) is RNA binding. Y118 is a binding site for substrate. The interaction with tRNA stretch occupies residues 168 to 172 (QCQSR).

It belongs to the tRNA pseudouridine synthase TruA family. As to quaternary structure, homodimer.

The catalysed reaction is uridine(38/39/40) in tRNA = pseudouridine(38/39/40) in tRNA. In terms of biological role, formation of pseudouridine at positions 38, 39 and 40 in the anticodon stem and loop of transfer RNAs. The polypeptide is tRNA pseudouridine synthase A (Escherichia fergusonii (strain ATCC 35469 / DSM 13698 / CCUG 18766 / IAM 14443 / JCM 21226 / LMG 7866 / NBRC 102419 / NCTC 12128 / CDC 0568-73)).